A 402-amino-acid polypeptide reads, in one-letter code: Propionate kinase (402 aa).

2 residues coordinate ATP: N11 and K18. N11 contributes to the Mg(2+) binding site. R86 contributes to the substrate binding site. Catalysis depends on D143, which acts as the Proton donor/acceptor. ATP is bound by residues H175, 203-207 (HLGNG), 278-280 (DLR), and 326-330 (GIGEN).

Belongs to the acetokinase family. TdcD subfamily. As to quaternary structure, homodimer. Mg(2+) is required as a cofactor.

The catalysed reaction is propanoate + ATP = propanoyl phosphate + ADP. It functions in the pathway amino-acid degradation; L-threonine degradation via propanoate pathway; propanoate from L-threonine: step 4/4. Its function is as follows. Catalyzes the conversion of propionyl phosphate and ADP to propionate and ATP. The sequence is that of Propionate kinase from Escherichia coli O6:H1 (strain CFT073 / ATCC 700928 / UPEC).